Consider the following 90-residue polypeptide: Small ribosomal subunit protein bS20 (90 aa).

Belongs to the bacterial ribosomal protein bS20 family.

Binds directly to 16S ribosomal RNA. This Rickettsia felis (strain ATCC VR-1525 / URRWXCal2) (Rickettsia azadi) protein is Small ribosomal subunit protein bS20.